We begin with the raw amino-acid sequence, 60 residues long: Potassium channel toxin alpha-KTx 29.2 (60 aa).

An N-terminal signal peptide occupies residues 1–28; the sequence is MKSVCGVLIILVVLTTMLSISTFSTVGA. 3 disulfides stabilise this stretch: cysteine 32/cysteine 51, cysteine 40/cysteine 56, and cysteine 44/cysteine 58.

This sequence belongs to the short scorpion toxin superfamily. Potassium channel inhibitor family. Alpha-KTx 29 subfamily. In terms of tissue distribution, expressed by the venom gland.

The protein resides in the secreted. Functionally, weakly inhibits the Kv1.3/KCNA3 channel (1 uM of thetoxin inhibits currents by 13.2%) and Kv7.1/KCNQ1 channel (10 uM of the toxin inhibits currents by 27.7%). This is Potassium channel toxin alpha-KTx 29.2 from Lychas mucronatus (Chinese swimming scorpion).